Here is a 116-residue protein sequence, read N- to C-terminus: Flagellar transcriptional regulator FlhD (116 aa).

The protein belongs to the FlhD family. Homodimer; disulfide-linked. Forms a heterohexamer composed of two FlhC and four FlhD subunits. Each FlhC binds a FlhD dimer, forming a heterotrimer, and a hexamer assembles by dimerization of two heterotrimers.

It localises to the cytoplasm. Its function is as follows. Functions in complex with FlhC as a master transcriptional regulator that regulates transcription of several flagellar and non-flagellar operons by binding to their promoter region. Activates expression of class 2 flagellar genes, including fliA, which is a flagellum-specific sigma factor that turns on the class 3 genes. Also regulates genes whose products function in a variety of physiological pathways. This is Flagellar transcriptional regulator FlhD from Serratia proteamaculans (strain 568).